A 215-amino-acid polypeptide reads, in one-letter code: Outer-membrane lipoprotein carrier protein (215 aa).

An N-terminal signal peptide occupies residues 1–24; the sequence is MFVLKARHLMAAGLVSLAAWSAGA.

The protein belongs to the LolA family. Monomer.

The protein resides in the periplasm. Its function is as follows. Participates in the translocation of lipoproteins from the inner membrane to the outer membrane. Only forms a complex with a lipoprotein if the residue after the N-terminal Cys is not an aspartate (The Asp acts as a targeting signal to indicate that the lipoprotein should stay in the inner membrane). The sequence is that of Outer-membrane lipoprotein carrier protein from Ralstonia nicotianae (strain ATCC BAA-1114 / GMI1000) (Ralstonia solanacearum).